A 102-amino-acid polypeptide reads, in one-letter code: Small ribosomal subunit protein uS10 (102 aa).

Belongs to the universal ribosomal protein uS10 family. As to quaternary structure, part of the 30S ribosomal subunit.

Functionally, involved in the binding of tRNA to the ribosomes. The sequence is that of Small ribosomal subunit protein uS10 from Leptospira biflexa serovar Patoc (strain Patoc 1 / Ames).